The chain runs to 215 residues: 3-demethoxyubiquinol 3-hydroxylase (215 aa).

The Fe cation site is built by E64, E94, H97, E146, E178, and H181.

Belongs to the COQ7 family. It depends on Fe cation as a cofactor.

The protein localises to the cell membrane. The enzyme catalyses a 5-methoxy-2-methyl-3-(all-trans-polyprenyl)benzene-1,4-diol + AH2 + O2 = a 3-demethylubiquinol + A + H2O. It functions in the pathway cofactor biosynthesis; ubiquinone biosynthesis. Its function is as follows. Catalyzes the hydroxylation of 2-nonaprenyl-3-methyl-6-methoxy-1,4-benzoquinol during ubiquinone biosynthesis. This is 3-demethoxyubiquinol 3-hydroxylase from Pseudomonas savastanoi pv. phaseolicola (strain 1448A / Race 6) (Pseudomonas syringae pv. phaseolicola (strain 1448A / Race 6)).